Reading from the N-terminus, the 245-residue chain is Carboxy-S-adenosyl-L-methionine synthase (245 aa).

Residues Tyr42, 67–69 (GCS), 92–93 (DN), 120–121 (DI), Asn135, and Arg202 each bind S-adenosyl-L-methionine.

Belongs to the class I-like SAM-binding methyltransferase superfamily. Cx-SAM synthase family. In terms of assembly, homodimer.

The enzyme catalyses prephenate + S-adenosyl-L-methionine = carboxy-S-adenosyl-L-methionine + 3-phenylpyruvate + H2O. Functionally, catalyzes the conversion of S-adenosyl-L-methionine (SAM) to carboxy-S-adenosyl-L-methionine (Cx-SAM). This is Carboxy-S-adenosyl-L-methionine synthase from Vibrio vulnificus (strain CMCP6).